We begin with the raw amino-acid sequence, 148 residues long: Protein MGF 360-18R (148 aa).

This sequence belongs to the asfivirus MGF 360 family.

In terms of biological role, plays a role in virus cell tropism, and may be required for efficient virus replication in macrophages. This African swine fever virus (strain Badajoz 1971 Vero-adapted) (Ba71V) protein is Protein MGF 360-18R.